Reading from the N-terminus, the 85-residue chain is Small ribosomal subunit protein bS20 (85 aa).

Belongs to the bacterial ribosomal protein bS20 family.

Functionally, binds directly to 16S ribosomal RNA. The protein is Small ribosomal subunit protein bS20 of Cytophaga hutchinsonii (strain ATCC 33406 / DSM 1761 / CIP 103989 / NBRC 15051 / NCIMB 9469 / D465).